Here is a 157-residue protein sequence, read N- to C-terminus: Glycine-rich RNA-binding, abscisic acid-inducible protein (157 aa).

Positions tyrosine 8–serine 86 constitute an RRM domain. The interval asparagine 82–aspartate 157 is disordered. Over residues arginine 87–aspartate 157 the composition is skewed to gly residues.

In terms of biological role, possibly has a role in RNA transcription or processing during stress. The sequence is that of Glycine-rich RNA-binding, abscisic acid-inducible protein (RAB15) from Zea mays (Maize).